The sequence spans 116 residues: Ribosome-binding factor A (116 aa).

The protein belongs to the RbfA family. Monomer. Binds 30S ribosomal subunits, but not 50S ribosomal subunits or 70S ribosomes.

The protein localises to the cytoplasm. One of several proteins that assist in the late maturation steps of the functional core of the 30S ribosomal subunit. Associates with free 30S ribosomal subunits (but not with 30S subunits that are part of 70S ribosomes or polysomes). Required for efficient processing of 16S rRNA. May interact with the 5'-terminal helix region of 16S rRNA. In Streptococcus agalactiae, this protein is Ribosome-binding factor A.